The chain runs to 149 residues: Calmodulin-5/6/7/8 (149 aa).

Ala-2 carries the N-acetylalanine modification. 4 EF-hand domains span residues 8–43, 44–79, 81–116, and 117–149; these read DQIS…LGQN, PTEA…KMKD, DSEE…LGEK, and LTDE…MMAK. Asp-21, Asp-23, Asp-25, Cys-27, Glu-32, Asp-57, Asp-59, Asn-61, Thr-63, Glu-68, Asp-94, Asp-96, Asn-98, and Glu-105 together coordinate Ca(2+). Lys-116 carries the N6,N6,N6-trimethyllysine modification. The Ca(2+) site is built by Asp-130, Asp-132, Asp-134, Gln-136, and Glu-141.

Belongs to the calmodulin family. In terms of tissue distribution, high expression of PCM5 and 8 in stolon tips and stems, moderate in roots, and low in leaves. Steady-state expression of PCM6 in all the tissues tested, except in the leaves where the expression is lower.

Its function is as follows. Calmodulin mediates the control of a large number of enzymes, ion channels and other proteins by Ca(2+). Among the enzymes to be stimulated by the calmodulin-Ca(2+) complex are a number of protein kinases and phosphatases. This Solanum tuberosum (Potato) protein is Calmodulin-5/6/7/8 (PCM5).